Here is a 469-residue protein sequence, read N- to C-terminus: Glutamine synthetase (469 aa).

Residues 13 to 97 (HEVKFVDLRF…IRCDILEPGT (85 aa)) form the GS beta-grasp domain. Residues 105–469 (PRSIAKRAED…PVEFELYYSV (365 aa)) enclose the GS catalytic domain. Mg(2+) is bound by residues glutamate 130 and glutamate 132. Glutamate 208 contacts ATP. Residues glutamate 213 and glutamate 221 each coordinate Mg(2+). L-glutamate is bound by residues 265 to 266 (NG) and glycine 266. Mg(2+) is bound at residue histidine 270. ATP contacts are provided by residues 272–274 (HMS) and serine 274. L-glutamate contacts are provided by arginine 322, glutamate 328, and arginine 340. Positions 340, 345, and 353 each coordinate ATP. Position 358 (glutamate 358) interacts with Mg(2+). Arginine 360 contributes to the L-glutamate binding site. An O-AMP-tyrosine modification is found at tyrosine 398.

The protein belongs to the glutamine synthetase family. As to quaternary structure, oligomer of 12 subunits arranged in the form of two hexagons. The cofactor is Mn(2+).

It localises to the cytoplasm. The enzyme catalyses L-glutamate + NH4(+) + ATP = L-glutamine + ADP + phosphate + H(+). Its activity is regulated as follows. When cellular nitrogen levels are high, the C-terminal adenylyl transferase (AT) of GlnE inhibits GlnA by covalent transfer of an adenylyl group from ATP to Tyr-398. Conversely, when nitrogen levels are low, the N-terminal adenylyl removase (AR) of GlnE activates GlnA by removing the adenylyl group by phosphorolysis. The fully adenylated enzyme complex is inactive. In terms of biological role, catalyzes the ATP-dependent biosynthesis of glutamine from glutamate and ammonia. This is Glutamine synthetase from Salmonella typhi.